The chain runs to 827 residues: Leucine--tRNA ligase (827 aa).

Residues Pro-42 to His-52 carry the 'HIGH' region motif. The short motif at Lys-583–Ser-587 is the 'KMSKS' region element. Lys-586 lines the ATP pocket.

It belongs to the class-I aminoacyl-tRNA synthetase family.

The protein resides in the cytoplasm. It carries out the reaction tRNA(Leu) + L-leucine + ATP = L-leucyl-tRNA(Leu) + AMP + diphosphate. The sequence is that of Leucine--tRNA ligase from Desulfitobacterium hafniense (strain DSM 10664 / DCB-2).